A 128-amino-acid chain; its full sequence is Ribonuclease P protein component (128 aa).

The protein belongs to the RnpA family. In terms of assembly, consists of a catalytic RNA component (M1 or rnpB) and a protein subunit.

The enzyme catalyses Endonucleolytic cleavage of RNA, removing 5'-extranucleotides from tRNA precursor.. RNaseP catalyzes the removal of the 5'-leader sequence from pre-tRNA to produce the mature 5'-terminus. It can also cleave other RNA substrates such as 4.5S RNA. The protein component plays an auxiliary but essential role in vivo by binding to the 5'-leader sequence and broadening the substrate specificity of the ribozyme. The sequence is that of Ribonuclease P protein component from Prochlorococcus marinus (strain MIT 9313).